Here is a 147-residue protein sequence, read N- to C-terminus: MMFRTSLMRFAAAFFAIVFVVLVGVARSEECTRTCIAQNCDTLSIRYGKYCGIGHSGCPGEEPCDDLDACCKIHDHCVELNGMTNISCHKKFQRCVNRLSKAIKQSKNKKVGFSTKCPYSVVIPTVNQGMDIGILFSQLGNDMKTEL.

A signal peptide spans 1-28 (MMFRTSLMRFAAAFFAIVFVVLVGVARS). 6 disulfide bridges follow: Cys-31/Cys-58, Cys-35/Cys-64, Cys-40/Cys-117, Cys-51/Cys-71, Cys-70/Cys-95, and Cys-77/Cys-88. The Ca(2+) site is built by Tyr-50, Gly-52, and His-55. Residue His-74 is part of the active site. Asp-75 contributes to the Ca(2+) binding site. The short motif at 144 to 147 (KTEL) is the Prevents secretion from ER element.

It belongs to the phospholipase A2 family. Ca(2+) is required as a cofactor. As to expression, ubiquitous but expressed at a low level. Detected in vascular tissues and in the guard cells. Predominantly detected in pollen.

The protein resides in the secreted. It is found in the endoplasmic reticulum. The catalysed reaction is a 1,2-diacyl-sn-glycero-3-phosphocholine + H2O = a 1-acyl-sn-glycero-3-phosphocholine + a fatty acid + H(+). Inhibited by aristolochic acid. PA2 catalyzes the calcium-dependent hydrolysis of the 2-acyl groups in 3-sn-phosphoglycerides. Releases lysophospholipids (LPLs) and free fatty acids (FFAs) from membrane phospholipids in response to hormones and other external stimuli. Regulates the process of cell elongation and plays important roles in shoot gravitropism by mediating auxin-induced cell elongation. Involved in stomatal opening in response to light. Plays a role in pollen development and germination and tube growth. This Arabidopsis thaliana (Mouse-ear cress) protein is Phospholipase A2-beta (PLA2-BETA).